The primary structure comprises 252 residues: uncharacterized protein (252 aa).

The 235-residue stretch at 13-247 (ITLENVNKWY…PKSERTRAFL (235 aa)) folds into the ABC transporter domain. 45 to 52 (GPSGSGKS) lines the ATP pocket.

This sequence belongs to the ABC transporter superfamily.

Its subcellular location is the cell inner membrane. Functionally, probably part of a binding-protein-dependent transport system YdhWXYZ for an amino acid. Probably responsible for energy coupling to the transport system. This is an uncharacterized protein from Escherichia coli (strain K12).